Consider the following 723-residue polypeptide: Protein Hook homolog (723 aa).

One can recognise a Calponin-homology (CH) domain in the interval 4 to 120 (TELCECLVQW…RLLQLILGCA (117 aa)). Coiled coils occupy residues 162–423 (VLPE…MQLQ) and 457–665 (EIKE…IVSA). The disordered stretch occupies residues 682–723 (LANGGPMQGGQSFLARQRQATSRRTTVSTTHPGHARSVNFVN). Over residues 696–711 (ARQRQATSRRTTVSTT) the composition is skewed to low complexity.

Belongs to the hook family. In terms of assembly, interacts with microtubules.

It localises to the cytoplasm. It is found in the cytoskeleton. May function to promote vesicle trafficking and/or fusion. May act to link a number of membrane-bound organelles to the cytoskeleton. The protein is Protein Hook homolog of Branchiostoma floridae (Florida lancelet).